The primary structure comprises 2179 residues: Probable inactive serine/threonine-protein kinase lvsG (2179 aa).

A disordered region spans residues D100–S167. 2 stretches are compositionally biased toward low complexity: residues N106–G121 and L141–S159. One copy of the WD 1 repeat lies at L216–P256. 9 disordered regions span residues L281–S300, D523–W556, D589–K621, K778–F801, N844–S959, A1033–L1055, G1079–D1153, N1339–S1362, and T1785–L1807. In terms of domain architecture, BEACH spans Y463–F801. Over residues N534 to D548 the composition is skewed to low complexity. The segment covering S590–G602 has biased composition (gly residues). Low complexity-rich tracts occupy residues Q783–Q800, N853–N943, A1033–A1047, and T1084–N1098. A coiled-coil region spans residues L1021–S1049. Positions E1064–F1400 constitute a Protein kinase domain. Over residues M1099 to I1122 the composition is skewed to polar residues. The segment covering Q1123–Q1134 has biased composition (low complexity). The segment covering N1135–D1153 has biased composition (polar residues). Composition is skewed to low complexity over residues N1339–N1360 and T1785–N1801. 6 WD repeats span residues E1864–T1903, Q1906–V1942, E1945–E1983, S2007–Q2048, H2052–S2089, and P2149–Q2179.

Belongs to the protein kinase superfamily. Ser/Thr protein kinase family.

The sequence is that of Probable inactive serine/threonine-protein kinase lvsG (lvsG) from Dictyostelium discoideum (Social amoeba).